The chain runs to 309 residues: tRNA pseudouridine synthase B (309 aa).

Asp-45 functions as the Nucleophile in the catalytic mechanism.

This sequence belongs to the pseudouridine synthase TruB family. Type 1 subfamily.

The enzyme catalyses uridine(55) in tRNA = pseudouridine(55) in tRNA. Functionally, responsible for synthesis of pseudouridine from uracil-55 in the psi GC loop of transfer RNAs. This chain is tRNA pseudouridine synthase B, found in Oleidesulfovibrio alaskensis (strain ATCC BAA-1058 / DSM 17464 / G20) (Desulfovibrio alaskensis).